Here is a 418-residue protein sequence, read N- to C-terminus: Tyrosine--tRNA ligase (418 aa).

Residue Tyr-34 participates in L-tyrosine binding. A 'HIGH' region motif is present at residues 39 to 48; that stretch reads PTADSLHLGH. Residues Tyr-169 and Gln-173 each contribute to the L-tyrosine site. The 'KMSKS' region motif lies at 229 to 233; sequence KFGKS. An ATP-binding site is contributed by Lys-232. The region spanning 352-418 is the S4 RNA-binding domain; the sequence is LNIVDMLVTA…GKKKYAVLTY (67 aa).

The protein belongs to the class-I aminoacyl-tRNA synthetase family. TyrS type 1 subfamily. In terms of assembly, homodimer.

Its subcellular location is the cytoplasm. It catalyses the reaction tRNA(Tyr) + L-tyrosine + ATP = L-tyrosyl-tRNA(Tyr) + AMP + diphosphate + H(+). Its function is as follows. Catalyzes the attachment of tyrosine to tRNA(Tyr) in a two-step reaction: tyrosine is first activated by ATP to form Tyr-AMP and then transferred to the acceptor end of tRNA(Tyr). The sequence is that of Tyrosine--tRNA ligase from Streptococcus equi subsp. equi (strain 4047).